The primary structure comprises 451 residues: Ribonuclease J (451 aa).

Residues histidine 84, histidine 86, aspartate 88, histidine 89, histidine 155, and aspartate 177 each contribute to the Zn(2+) site. A substrate-binding site is contributed by 384-388 (HVSGH). Histidine 410 provides a ligand contact to Zn(2+).

This sequence belongs to the metallo-beta-lactamase superfamily. RNA-metabolizing metallo-beta-lactamase-like family. Archaeal RNase J subfamily. As to quaternary structure, homodimer. The cofactor is Zn(2+).

Its subcellular location is the cytoplasm. Inhibited by 1,10-phenanthroline. Its function is as follows. A highly processive 5'-3' exoribonuclease; no evidence has been seen for endonuclease activity. Prefers 5'-phosphate or 5'-hydroxyl ends; 5'-triphosphate substrates are very poorly degraded, does not degrade circular RNA. Does not degrade pre-tRNA(Trp) suggesting it is inhibited by strong secondary structures. Also degrades ssNDA but not dsDNA. The chain is Ribonuclease J from Pyrococcus abyssi (strain GE5 / Orsay).